The following is a 250-amino-acid chain: Thiamine thiazole synthase (250 aa).

NAD(+) is bound by residues Ser-36, 55 to 56, Gly-63, Val-126, and 152 to 154; these read EE and HVD. Residues Asp-154 and His-169 each contribute to the Fe cation site. Position 216 (Met-216) interacts with NAD(+). Glycine is bound at residue Arg-226.

The protein belongs to the THI4 family. Homooctamer; tetramer of dimers. Requires Fe(2+) as cofactor.

It catalyses the reaction hydrogen sulfide + glycine + NAD(+) = ADP-5-ethyl-4-methylthiazole-2-carboxylate + nicotinamide + 3 H2O + H(+). The protein operates within cofactor biosynthesis; thiamine diphosphate biosynthesis. Its function is as follows. Involved in the biosynthesis of the thiazole moiety of thiamine. Catalyzes the conversion of NAD and glycine to adenosine diphosphate 5-(2-hydroxyethyl)-4-methylthiazole-2-carboxylate (ADT), an adenylated thiazole intermediate, using free sulfide as a source of sulfur. The sequence is that of Thiamine thiazole synthase from Thermotoga maritima (strain ATCC 43589 / DSM 3109 / JCM 10099 / NBRC 100826 / MSB8).